The primary structure comprises 795 residues: Lon protease 1 (795 aa).

Residues 9-204 (LPVLPLRNTV…RVLALLLRDL (196 aa)) enclose the Lon N-terminal domain. Residue 360-367 (GPPGVGKT) coordinates ATP. In terms of domain architecture, Lon proteolytic spans 596–777 (EPQVGAAQGL…GEVLKLLLLP (182 aa)). Active-site residues include Ser-683 and Lys-726.

The protein belongs to the peptidase S16 family. Homohexamer. Organized in a ring with a central cavity.

Its subcellular location is the cytoplasm. It catalyses the reaction Hydrolysis of proteins in presence of ATP.. ATP-dependent serine protease that mediates the selective degradation of mutant and abnormal proteins as well as certain short-lived regulatory proteins. Required for cellular homeostasis and for survival from DNA damage and developmental changes induced by stress. Degrades polypeptides processively to yield small peptide fragments that are 5 to 10 amino acids long. Binds to DNA in a double-stranded, site-specific manner. The chain is Lon protease 1 from Thermus thermophilus (strain ATCC BAA-163 / DSM 7039 / HB27).